The sequence spans 226 residues: Glutathione peroxidase 3 (226 aa).

The first 24 residues, 1–24 (MARLLQASCLLSLLLAGFVPQSRG), serve as a signal peptide directing secretion. Sec73 is an active-site residue. Sec73 is a non-standard amino acid (selenocysteine).

This sequence belongs to the glutathione peroxidase family. As to quaternary structure, homotetramer. As to expression, secreted in plasma.

It localises to the secreted. The enzyme catalyses 2 glutathione + H2O2 = glutathione disulfide + 2 H2O. It catalyses the reaction tert-butyl hydroperoxide + 2 glutathione = tert-butanol + glutathione disulfide + H2O. In terms of biological role, protects cells and enzymes from oxidative damage, by catalyzing the reduction of hydrogen peroxide, lipid peroxides and organic hydroperoxide, by glutathione. The protein is Glutathione peroxidase 3 of Pongo pygmaeus (Bornean orangutan).